We begin with the raw amino-acid sequence, 1262 residues long: Zinc finger protein 592 (1262 aa).

The disordered stretch occupies residues 23–45; the sequence is SLDAKEAIQAPSEENESPLKSSG. Ser-78, Ser-142, Ser-145, and Ser-146 each carry phosphoserine. Disordered stretches follow at residues 122–174, 200–278, and 294–494; these read SFTS…PPPG, KKEP…AHSK, and VANV…ASTP. Residues Lys-200 and Lys-204 each participate in a glycyl lysine isopeptide (Lys-Gly) (interchain with G-Cter in SUMO2) cross-link. Basic and acidic residues-rich tracts occupy residues 213–232 and 298–308; these read QQEHEQGGQKVVEPHKDLDS and TKEDQPGHTKD. Residues 343-367 are compositionally biased toward low complexity; it reads PSDSPRSICSDSSSKGSPSVAASSP. Over residues 454 to 463 the composition is skewed to polar residues; sequence IKTSDSSSPC. Low complexity predominate over residues 484 to 494; sequence QQSTAPQASTP. Residue Ser-529 is modified to Phosphoserine. A Glycyl lysine isopeptide (Lys-Gly) (interchain with G-Cter in SUMO2) cross-link involves residue Lys-546. Residue Ser-573 is modified to Phosphoserine. A C2H2-type 1; atypical zinc finger spans residues 587 to 612; that stretch reads YCCLECGDAFALEKSLSQHYSRRSVH. The C2H2-type 2; atypical zinc-finger motif lies at 615 to 639; the sequence is VLCTLCSKTLLFFNKCSLLRHARDH. Ser-691 carries the phosphoserine modification. The C2H2-type 3; degenerate zinc-finger motif lies at 711 to 731; the sequence is TKCPECHKQMRDYMVLATHFQ. A C2H2-type 4 zinc finger spans residues 740–764; the sequence is LTCQVCQMLLPNQCSFCAHQRIHAH. Residues 768-790 form a C2H2-type 5; atypical zinc finger; that stretch reads YCCPECGVLCRSAYFQTHVKENC. C2H2-type zinc fingers lie at residues 799–822, 827–850, and 892–915; these read YRCIHCGVIHLTLALLKSHIQERH, HKCAFCPMAFKTASSTMDHSTTQH, and FKCPECPLLFLQKPELMQHVKNTH. The span at 924–935 shows a compositional bias: low complexity; sequence LSSLQSSTDTSS. A disordered region spans residues 924–979; it reads LSSLQSSTDTSSNRPGSRAPAEPPATNVAARGSSLTAGRWGRPEAHRRAEARPRMR. Over residues 964-976 the composition is skewed to basic and acidic residues; that stretch reads GRPEAHRRAEARP. 2 consecutive C2H2-type zinc fingers follow at residues 983–1006 and 1013–1036; these read WTCQECQEWVPDRESYVSHMKKSH and YPCRQCEQSFHNPSSLRKHIRNNH. A C2H2-type 11; atypical zinc finger spans residues 1043 to 1069; it reads YTCGYCTEDSPSFPRPSLLESHISLMH. Ser-1089 carries the post-translational modification Phosphoserine. The C2H2-type 12; atypical zinc finger occupies 1124 to 1146; that stretch reads FQCAKCTFATDSELEFQSHIPQH. The C2H2-type 13 zinc finger occupies 1153–1176; it reads AQCLLCGLCYTSTSSLNRHLFIVH. A phosphoserine mark is found at Ser-1198 and Ser-1202. Residues 1222-1262 are disordered; it reads PLVTDLGGQQGLALDEDSAQDPQNQPQASQDQNSHALSPQV. Positions 1241–1262 are enriched in polar residues; sequence QDPQNQPQASQDQNSHALSPQV.

This sequence belongs to the krueppel C2H2-type zinc-finger protein family. Interacts with ZMYND8. Expressed in the brain.

The protein localises to the nucleus. In terms of biological role, may be involved in transcriptional regulation. The chain is Zinc finger protein 592 (Znf592) from Mus musculus (Mouse).